Reading from the N-terminus, the 288-residue chain is Probable endonuclease 4 (288 aa).

Residues His-75, His-115, Glu-153, Asp-187, His-190, His-224, Asp-237, His-239, and Glu-269 each contribute to the Zn(2+) site.

It belongs to the AP endonuclease 2 family. It depends on Zn(2+) as a cofactor.

The catalysed reaction is Endonucleolytic cleavage to 5'-phosphooligonucleotide end-products.. In terms of biological role, endonuclease IV plays a role in DNA repair. It cleaves phosphodiester bonds at apurinic or apyrimidinic (AP) sites, generating a 3'-hydroxyl group and a 5'-terminal sugar phosphate. This chain is Probable endonuclease 4, found in Chlamydia muridarum (strain MoPn / Nigg).